The following is an 83-amino-acid chain: MNNVLKFSALALAAVLATGCSSHSKETEARLTATEDAAARAQARADEAYRKADEALGAAQKAQQTADEANERALRMLEKASRK.

The N-terminal stretch at 1-19 is a signal peptide; that stretch reads MNNVLKFSALALAAVLATG. C20 carries the N-palmitoyl cysteine lipid modification. C20 carries S-diacylglycerol cysteine lipidation.

It is found in the cell outer membrane. The polypeptide is Major outer membrane lipoprotein (oprI) (Pseudomonas aeruginosa (strain ATCC 15692 / DSM 22644 / CIP 104116 / JCM 14847 / LMG 12228 / 1C / PRS 101 / PAO1)).